Consider the following 352-residue polypeptide: tRNA N6-adenosine threonylcarbamoyltransferase (352 aa).

His-111 and His-115 together coordinate Fe cation. Substrate contacts are provided by residues 133 to 137 (LASGG), Asp-166, Gly-179, and Asn-275. Position 300 (Asp-300) interacts with Fe cation.

The protein belongs to the KAE1 / TsaD family. Requires Fe(2+) as cofactor.

The protein localises to the cytoplasm. It catalyses the reaction L-threonylcarbamoyladenylate + adenosine(37) in tRNA = N(6)-L-threonylcarbamoyladenosine(37) in tRNA + AMP + H(+). In terms of biological role, required for the formation of a threonylcarbamoyl group on adenosine at position 37 (t(6)A37) in tRNAs that read codons beginning with adenine. Is involved in the transfer of the threonylcarbamoyl moiety of threonylcarbamoyl-AMP (TC-AMP) to the N6 group of A37, together with TsaE and TsaB. TsaD likely plays a direct catalytic role in this reaction. The chain is tRNA N6-adenosine threonylcarbamoyltransferase from Treponema pallidum (strain Nichols).